Here is a 227-residue protein sequence, read N- to C-terminus: UPF0758 protein CPF_2399 (227 aa).

The MPN domain occupies lysine 105–leucine 227. Histidine 176, histidine 178, and aspartate 189 together coordinate Zn(2+). The JAMM motif motif lies at histidine 176 to aspartate 189.

This sequence belongs to the UPF0758 family.

The polypeptide is UPF0758 protein CPF_2399 (Clostridium perfringens (strain ATCC 13124 / DSM 756 / JCM 1290 / NCIMB 6125 / NCTC 8237 / Type A)).